Here is a 51-residue protein sequence, read N- to C-terminus: DNA-directed RNA polymerase subunit Rpo12 (51 aa).

Residues Cys14, Cys29, and Cys32 each coordinate Zn(2+).

It belongs to the archaeal Rpo12/eukaryotic RPC10 RNA polymerase subunit family. Part of the RNA polymerase complex. It depends on Zn(2+) as a cofactor.

Its subcellular location is the cytoplasm. The catalysed reaction is RNA(n) + a ribonucleoside 5'-triphosphate = RNA(n+1) + diphosphate. Functionally, DNA-dependent RNA polymerase (RNAP) catalyzes the transcription of DNA into RNA using the four ribonucleoside triphosphates as substrates. The sequence is that of DNA-directed RNA polymerase subunit Rpo12 from Methanopyrus kandleri (strain AV19 / DSM 6324 / JCM 9639 / NBRC 100938).